The following is a 354-amino-acid chain: DNA integrity scanning protein DisA (354 aa).

The DAC domain occupies 6-144 (DDELKKILKI…GDIKYVLRDS (139 aa)). Residues glycine 73, leucine 91, and 104–108 (TRHRT) contribute to the ATP site.

The protein belongs to the DisA family. As to quaternary structure, homooctamer. Mg(2+) serves as cofactor.

The enzyme catalyses 2 ATP = 3',3'-c-di-AMP + 2 diphosphate. In terms of biological role, participates in a DNA-damage check-point that is active prior to asymmetric division when DNA is damaged. DisA forms globular foci that rapidly scan along the chromosomes during sporulation, searching for lesions. When a lesion is present, DisA pauses at the lesion site. This triggers a cellular response that culminates in a temporary block in sporulation initiation. Also has diadenylate cyclase activity, catalyzing the condensation of 2 ATP molecules into cyclic di-AMP (c-di-AMP). c-di-AMP acts as a signaling molecule that couples DNA integrity with progression of sporulation. The rise in c-di-AMP level generated by DisA while scanning the chromosome, operates as a positive signal that advances sporulation; upon encountering a lesion, the DisA focus arrests at the damaged site and halts c-di-AMP synthesis. The protein is DNA integrity scanning protein DisA of Clostridium perfringens (strain 13 / Type A).